Consider the following 53-residue polypeptide: Photoreceptor disk component PRCD (53 aa).

Cysteine 2 carries the S-palmitoyl cysteine lipid modification. The interval 24–53 is disordered; that stretch reads PEPSRVDGTVVGSGSDTDLQSTGREKGPVK. A compositionally biased stretch (polar residues) spans 35 to 45; it reads GSGSDTDLQST.

This sequence belongs to the PRCD family. As to quaternary structure, interacts with RHO/rhodopsin; the interaction promotes PRCD stability. Post-translationally, palmitoylated at Cys-2. Palmitoylation is essential for protein stability and trafficking to the photoreceptor outer segment, but does not appear to be essential for membrane localization. Probably palmitoylated by ZDHHC3. In terms of processing, phosphorylated. In terms of tissue distribution, expressed in retina, where it localizes to both rod and cone photoreceptors (at protein level).

It localises to the cell projection. Its subcellular location is the cilium. The protein localises to the photoreceptor outer segment. It is found in the membrane. The protein resides in the endoplasmic reticulum. It localises to the golgi apparatus. In terms of biological role, involved in vision. The protein is Photoreceptor disk component PRCD of Mus musculus (Mouse).